We begin with the raw amino-acid sequence, 247 residues long: Protein Thf1 (247 aa).

Residues 198–224 (IAQVRQAMDDILEAQKKRREADQAKKE) adopt a coiled-coil conformation. The segment at 209-247 (LEAQKKRREADQAKKEGSDDTPTTEASTPDSEPTSEVSS) is disordered. The span at 210–226 (EAQKKRREADQAKKEGS) shows a compositional bias: basic and acidic residues. Residues 228–247 (DTPTTEASTPDSEPTSEVSS) show a composition bias toward polar residues.

The protein belongs to the THF1 family.

In terms of biological role, may be involved in photosynthetic membrane biogenesis. The polypeptide is Protein Thf1 (Acaryochloris marina (strain MBIC 11017)).